The primary structure comprises 291 residues: 3-methyl-2-oxobutanoate hydroxymethyltransferase (291 aa).

A compositionally biased stretch (polar residues) spans 1–10 (MTQLSAAQTP). Residues 1–20 (MTQLSAAQTPQPKPADGNRA) are disordered. Positions 71 and 110 each coordinate Mg(2+). Residues 71-72 (DS), aspartate 110, and lysine 140 contribute to the 3-methyl-2-oxobutanoate site. Residue glutamate 142 participates in Mg(2+) binding. Residue glutamate 208 is the Proton acceptor of the active site.

The protein belongs to the PanB family. In terms of assembly, homodecamer; pentamer of dimers. Mg(2+) is required as a cofactor.

It is found in the cytoplasm. It catalyses the reaction 3-methyl-2-oxobutanoate + (6R)-5,10-methylene-5,6,7,8-tetrahydrofolate + H2O = 2-dehydropantoate + (6S)-5,6,7,8-tetrahydrofolate. The protein operates within cofactor biosynthesis; (R)-pantothenate biosynthesis; (R)-pantoate from 3-methyl-2-oxobutanoate: step 1/2. Catalyzes the reversible reaction in which hydroxymethyl group from 5,10-methylenetetrahydrofolate is transferred onto alpha-ketoisovalerate to form ketopantoate. This Streptomyces coelicolor (strain ATCC BAA-471 / A3(2) / M145) protein is 3-methyl-2-oxobutanoate hydroxymethyltransferase.